A 204-amino-acid polypeptide reads, in one-letter code: GTP cyclohydrolase 1 (204 aa).

Zn(2+) contacts are provided by cysteine 92, histidine 95, and cysteine 165.

It belongs to the GTP cyclohydrolase I family. Homomer.

It catalyses the reaction GTP + H2O = 7,8-dihydroneopterin 3'-triphosphate + formate + H(+). It functions in the pathway cofactor biosynthesis; 7,8-dihydroneopterin triphosphate biosynthesis; 7,8-dihydroneopterin triphosphate from GTP: step 1/1. In Mycobacteroides abscessus (strain ATCC 19977 / DSM 44196 / CCUG 20993 / CIP 104536 / JCM 13569 / NCTC 13031 / TMC 1543 / L948) (Mycobacterium abscessus), this protein is GTP cyclohydrolase 1.